Consider the following 133-residue polypeptide: Small ribosomal subunit protein eS8 (133 aa).

A disordered region spans residues 1–22 (MGFYQGPDNRKITGGLKGKHRD).

Belongs to the eukaryotic ribosomal protein eS8 family. In terms of assembly, part of the 30S ribosomal subunit.

In Saccharolobus islandicus (strain Y.N.15.51 / Yellowstone #2) (Sulfolobus islandicus), this protein is Small ribosomal subunit protein eS8.